The following is a 62-amino-acid chain: Translational regulator CsrA (62 aa).

Belongs to the CsrA/RsmA family. As to quaternary structure, homodimer; the beta-strands of each monomer intercalate to form a hydrophobic core, while the alpha-helices form wings that extend away from the core.

It localises to the cytoplasm. A key translational regulator that binds mRNA to regulate translation initiation and/or mRNA stability. Mediates global changes in gene expression, shifting from rapid growth to stress survival by linking envelope stress, the stringent response and the catabolite repression systems. Usually binds in the 5'-UTR; binding at or near the Shine-Dalgarno sequence prevents ribosome-binding, repressing translation, binding elsewhere in the 5'-UTR can activate translation and/or stabilize the mRNA. Its function is antagonized by small RNA(s). The polypeptide is Translational regulator CsrA (Pasteurella multocida (strain Pm70)).